The primary structure comprises 632 residues: Sodium- and chloride-dependent GABA transporter 3 (632 aa).

Positions 1–41 (MTAEKALPLGNGKAAEEARESEAPGGGCSSGGAAPARHPRV) are disordered. The Cytoplasmic portion of the chain corresponds to 1–58 (MTAEKALPLGNGKAAEEARESEAPGGGCSSGGAAPARHPRVKRDKAVHERGHWNNKVE). Phosphoserine is present on S21. A run of 3 helical transmembrane segments spans residues 59-79 (FVLS…FPYL), 87-106 (AFLI…VFFL), and 131-151 (GIGY…IIIL). Residues 152–225 (AWAIFYLSNC…DGIEHIGNLR (74 aa)) lie on the Extracellular side of the membrane. N-linked (GlcNAc...) asparagine glycosylation is found at N187, N190, and N198. Helical transmembrane passes span 226-244 (WELA…FCIW), 253-270 (VVYV…ILLI), 306-323 (IFFS…LGSY), 335-356 (IMLC…FSVL), 389-408 (MPLS…FLGL), 438-456 (LLIL…VMLT), 473-493 (GMCL…VYGS), 514-533 (WCWM…FFLI), and 553-571 (IGWL…WICI). At 572–632 (TVWKTEGTLP…AAITEKETHF (61 aa)) the chain is on the cytoplasmic side.

Belongs to the sodium:neurotransmitter symporter (SNF) (TC 2.A.22) family. SLC6A11 subfamily. In terms of tissue distribution, widespread distribution in the brain.

Its subcellular location is the cell membrane. The enzyme catalyses 4-aminobutanoate(out) + chloride(out) + 2 Na(+)(out) = 4-aminobutanoate(in) + chloride(in) + 2 Na(+)(in). It catalyses the reaction taurine(out) + chloride(out) + 2 Na(+)(out) = taurine(in) + chloride(in) + 2 Na(+)(in). The catalysed reaction is beta-alanine(out) + chloride(out) + 2 Na(+)(out) = beta-alanine(in) + chloride(in) + 2 Na(+)(in). It carries out the reaction hypotaurine(out) + chloride(out) + 2 Na(+)(out) = hypotaurine(in) + chloride(in) + 2 Na(+)(in). Its activity is regulated as follows. GABA transport is inhibited by SNAP-5114. Mediates sodium- and chloride-dependent transport of gamma-aminobutyric acid (GABA). Can also mediate transport of beta-alanine and to a lower extent that of taurine and hypotaurine. This Homo sapiens (Human) protein is Sodium- and chloride-dependent GABA transporter 3 (SLC6A11).